The sequence spans 213 residues: MLFKNEILRCYLIGGSQDTHHDPDEFLTKVEAAMQAGITAFQYREKGTSTLSKAETLALGQQVRELATKYGVPLFVDDDLELAAAIKADGIHVGQKDQRIEEVLAAVSDQLMVGYSCNTAAQVAHANQLNVDYIGTGPVFPTISKDDAGSALGVDGLADFVEQSAHPVVAIGGISLDNVGATLTSGCAGLSMISMVLGADDVAGTVKKILELY.

4-amino-2-methyl-5-(diphosphooxymethyl)pyrimidine is bound by residues 42-46 (QYREK) and D77. The Mg(2+) site is built by D78 and D97. Residue S116 participates in 4-amino-2-methyl-5-(diphosphooxymethyl)pyrimidine binding. 142–144 (TIS) provides a ligand contact to 2-[(2R,5Z)-2-carboxy-4-methylthiazol-5(2H)-ylidene]ethyl phosphate. K145 is a binding site for 4-amino-2-methyl-5-(diphosphooxymethyl)pyrimidine. 2-[(2R,5Z)-2-carboxy-4-methylthiazol-5(2H)-ylidene]ethyl phosphate-binding positions include G173 and 193–194 (IS).

Belongs to the thiamine-phosphate synthase family. It depends on Mg(2+) as a cofactor.

It carries out the reaction 2-[(2R,5Z)-2-carboxy-4-methylthiazol-5(2H)-ylidene]ethyl phosphate + 4-amino-2-methyl-5-(diphosphooxymethyl)pyrimidine + 2 H(+) = thiamine phosphate + CO2 + diphosphate. It catalyses the reaction 2-(2-carboxy-4-methylthiazol-5-yl)ethyl phosphate + 4-amino-2-methyl-5-(diphosphooxymethyl)pyrimidine + 2 H(+) = thiamine phosphate + CO2 + diphosphate. The catalysed reaction is 4-methyl-5-(2-phosphooxyethyl)-thiazole + 4-amino-2-methyl-5-(diphosphooxymethyl)pyrimidine + H(+) = thiamine phosphate + diphosphate. Its pathway is cofactor biosynthesis; thiamine diphosphate biosynthesis; thiamine phosphate from 4-amino-2-methyl-5-diphosphomethylpyrimidine and 4-methyl-5-(2-phosphoethyl)-thiazole: step 1/1. Its function is as follows. Condenses 4-methyl-5-(beta-hydroxyethyl)thiazole monophosphate (THZ-P) and 2-methyl-4-amino-5-hydroxymethyl pyrimidine pyrophosphate (HMP-PP) to form thiamine monophosphate (TMP). This chain is Thiamine-phosphate synthase, found in Limosilactobacillus fermentum (strain NBRC 3956 / LMG 18251) (Lactobacillus fermentum).